Here is a 353-residue protein sequence, read N- to C-terminus: Putative permease PerM (353 aa).

7 helical membrane passes run 19 to 39 (IALL…SGLL), 72 to 92 (IVLV…LPIA), 156 to 176 (LVGL…VFFL), 217 to 237 (VLEM…FGLN), 240 to 260 (LLLA…AFVV), 281 to 301 (CFAV…PVLF), and 310 to 330 (LVII…GVFF).

It belongs to the autoinducer-2 exporter (AI-2E) (TC 2.A.86) family.

The protein resides in the cell membrane. In Escherichia coli O157:H7, this protein is Putative permease PerM (perM).